Reading from the N-terminus, the 766-residue chain is 5-methyltetrahydropteroyltriglutamate--homocysteine methyltransferase (766 aa).

Residues 16-19 (RELK) and K119 each bind 5-methyltetrahydropteroyltri-L-glutamate. L-homocysteine is bound by residues 440 to 442 (IGS) and E493. L-methionine-binding positions include 440-442 (IGS) and E493. Residues 524-525 (RC) and W570 contribute to the 5-methyltetrahydropteroyltri-L-glutamate site. D608 contacts L-homocysteine. D608 contacts L-methionine. E614 provides a ligand contact to 5-methyltetrahydropteroyltri-L-glutamate. Residues H650, C652, and E674 each coordinate Zn(2+). Catalysis depends on H703, which acts as the Proton donor. Zn(2+) is bound at residue C735.

This sequence belongs to the vitamin-B12 independent methionine synthase family. The cofactor is Zn(2+).

It catalyses the reaction 5-methyltetrahydropteroyltri-L-glutamate + L-homocysteine = tetrahydropteroyltri-L-glutamate + L-methionine. It participates in amino-acid biosynthesis; L-methionine biosynthesis via de novo pathway; L-methionine from L-homocysteine (MetE route): step 1/1. Its function is as follows. Catalyzes the transfer of a methyl group from 5-methyltetrahydrofolate to homocysteine resulting in methionine formation. The sequence is that of 5-methyltetrahydropteroyltriglutamate--homocysteine methyltransferase from Pseudomonas aeruginosa (strain LESB58).